We begin with the raw amino-acid sequence, 72 residues long: Translation initiation factor IF-1 (72 aa).

One can recognise an S1-like domain in the interval 1–72 (MAKEESIEIE…TKGRITYRYK (72 aa)).

This sequence belongs to the IF-1 family. As to quaternary structure, component of the 30S ribosomal translation pre-initiation complex which assembles on the 30S ribosome in the order IF-2 and IF-3, IF-1 and N-formylmethionyl-tRNA(fMet); mRNA recruitment can occur at any time during PIC assembly.

The protein localises to the cytoplasm. One of the essential components for the initiation of protein synthesis. Stabilizes the binding of IF-2 and IF-3 on the 30S subunit to which N-formylmethionyl-tRNA(fMet) subsequently binds. Helps modulate mRNA selection, yielding the 30S pre-initiation complex (PIC). Upon addition of the 50S ribosomal subunit IF-1, IF-2 and IF-3 are released leaving the mature 70S translation initiation complex. In Chlorobium chlorochromatii (strain CaD3), this protein is Translation initiation factor IF-1.